Reading from the N-terminus, the 494-residue chain is Sulfate adenylyltransferase subunit 1 (494 aa).

The tr-type G domain occupies 24–240 (TRPLRLITCG…LELATVRSAQ (217 aa)). The tract at residues 33 to 40 (GSVDDGKS) is G1. 33–40 (GSVDDGKS) is a GTP binding site. The segment at 91–95 (GITID) is G2. The tract at residues 112 to 115 (DTPG) is G3. GTP is bound by residues 112–116 (DTPGH) and 167–170 (NKID). Positions 167–170 (NKID) are G4. The segment at 204–206 (SAL) is G5.

Belongs to the TRAFAC class translation factor GTPase superfamily. Classic translation factor GTPase family. CysN/NodQ subfamily. Heterodimer composed of CysD, the smaller subunit, and CysN.

It catalyses the reaction sulfate + ATP + H(+) = adenosine 5'-phosphosulfate + diphosphate. Its pathway is sulfur metabolism; hydrogen sulfide biosynthesis; sulfite from sulfate: step 1/3. Its function is as follows. With CysD forms the ATP sulfurylase (ATPS) that catalyzes the adenylation of sulfate producing adenosine 5'-phosphosulfate (APS) and diphosphate, the first enzymatic step in sulfur assimilation pathway. APS synthesis involves the formation of a high-energy phosphoric-sulfuric acid anhydride bond driven by GTP hydrolysis by CysN coupled to ATP hydrolysis by CysD. The chain is Sulfate adenylyltransferase subunit 1 from Rhizobium tropici.